Reading from the N-terminus, the 276-residue chain is 3-methyl-2-oxobutanoate hydroxymethyltransferase (276 aa).

Mg(2+) contacts are provided by D46 and D85. 3-methyl-2-oxobutanoate-binding positions include D46–S47, D85, and K115. E117 serves as a coordination point for Mg(2+). Residue E184 is the Proton acceptor of the active site.

This sequence belongs to the PanB family. Homodecamer; pentamer of dimers. It depends on Mg(2+) as a cofactor.

Its subcellular location is the cytoplasm. The enzyme catalyses 3-methyl-2-oxobutanoate + (6R)-5,10-methylene-5,6,7,8-tetrahydrofolate + H2O = 2-dehydropantoate + (6S)-5,6,7,8-tetrahydrofolate. Its pathway is cofactor biosynthesis; (R)-pantothenate biosynthesis; (R)-pantoate from 3-methyl-2-oxobutanoate: step 1/2. Its function is as follows. Catalyzes the reversible reaction in which hydroxymethyl group from 5,10-methylenetetrahydrofolate is transferred onto alpha-ketoisovalerate to form ketopantoate. The protein is 3-methyl-2-oxobutanoate hydroxymethyltransferase of Heliobacterium modesticaldum (strain ATCC 51547 / Ice1).